Here is a 354-residue protein sequence, read N- to C-terminus: Glycerol-1-phosphate dehydrogenase [NAD(P)+] (354 aa).

NAD(+) contacts are provided by residues 102-106 (GRSID) and 124-127 (TAAS). Asp-129 contacts substrate. Ser-133 lines the NAD(+) pocket. Asp-176 provides a ligand contact to substrate. Zn(2+)-binding residues include Asp-176 and His-256. Residue His-260 coordinates substrate. His-272 serves as a coordination point for Zn(2+).

Belongs to the glycerol-1-phosphate dehydrogenase family. Zn(2+) is required as a cofactor.

The protein localises to the cytoplasm. It catalyses the reaction sn-glycerol 1-phosphate + NAD(+) = dihydroxyacetone phosphate + NADH + H(+). It carries out the reaction sn-glycerol 1-phosphate + NADP(+) = dihydroxyacetone phosphate + NADPH + H(+). It functions in the pathway membrane lipid metabolism; glycerophospholipid metabolism. Its function is as follows. Catalyzes the NAD(P)H-dependent reduction of dihydroxyacetonephosphate (DHAP or glycerone phosphate) to glycerol 1-phosphate (G1P). The G1P thus generated is used as the glycerophosphate backbone of phospholipids in the cellular membranes of Archaea. This Methanothrix thermoacetophila (strain DSM 6194 / JCM 14653 / NBRC 101360 / PT) (Methanosaeta thermophila) protein is Glycerol-1-phosphate dehydrogenase [NAD(P)+].